A 298-amino-acid chain; its full sequence is uncharacterized protein (298 aa).

The next 10 membrane-spanning stretches (helical) occupy residues 5–25 (ILFG…MSAF), 36–56 (MENV…IYPF), 76–96 (VVVG…ISLA), 97–117 (TATA…PLLL), 124–144 (STLI…DPSV), 147–167 (VGPV…LAYI), 181–201 (VILA…FIDI), 216–236 (ILWI…LTYA), 244–264 (IIAP…LYLG), and 272–292 (SSLG…PALL). The EamA 1 domain maps to 17–141 (LCFGIMSAFV…GIVGVVLISD (125 aa)). The EamA 2 domain maps to 183–288 (LAFAFGMSLL…ILCSGLLIAL (106 aa)).

This sequence belongs to the EamA transporter family.

The protein localises to the cell membrane. This is an uncharacterized protein from Helicobacter pylori (strain ATCC 700392 / 26695) (Campylobacter pylori).